Here is a 191-residue protein sequence, read N- to C-terminus: Large ribosomal subunit protein uL29m (191 aa).

It belongs to the universal ribosomal protein uL29 family. Component of the mitochondrial large ribosomal subunit. Mature mitochondrial ribosomes consist of a small (37S) and a large (54S) subunit. The 37S subunit contains at least 33 different proteins and 1 molecule of RNA (15S). The 54S subunit contains at least 45 different proteins and 1 molecule of RNA (21S).

The protein resides in the mitochondrion. The sequence is that of Large ribosomal subunit protein uL29m (MRPL4) from Sclerotinia sclerotiorum (strain ATCC 18683 / 1980 / Ss-1) (White mold).